The following is a 281-amino-acid chain: Ribosomal RNA small subunit methyltransferase A (281 aa).

6 residues coordinate S-adenosyl-L-methionine: Asn-35, Leu-37, Gly-62, Glu-83, Asp-107, and Asn-125.

This sequence belongs to the class I-like SAM-binding methyltransferase superfamily. rRNA adenine N(6)-methyltransferase family. RsmA subfamily.

Its subcellular location is the cytoplasm. It catalyses the reaction adenosine(1518)/adenosine(1519) in 16S rRNA + 4 S-adenosyl-L-methionine = N(6)-dimethyladenosine(1518)/N(6)-dimethyladenosine(1519) in 16S rRNA + 4 S-adenosyl-L-homocysteine + 4 H(+). In terms of biological role, specifically dimethylates two adjacent adenosines (A1518 and A1519) in the loop of a conserved hairpin near the 3'-end of 16S rRNA in the 30S particle. May play a critical role in biogenesis of 30S subunits. The chain is Ribosomal RNA small subunit methyltransferase A from Deinococcus geothermalis (strain DSM 11300 / CIP 105573 / AG-3a).